Here is a 333-residue protein sequence, read N- to C-terminus: Serine proteinase inhibitor 2 (333 aa).

Belongs to the serpin family. Poxviruses subfamily.

Its subcellular location is the host cytoplasm. Functionally, weak inhibitor of the interleukin-1-beta converting enzyme (ICE) and of granzyme B. Does not form a stable complex with ICE, but can for a stable complex with granzyme B. This chain is Serine proteinase inhibitor 2 (SERP2), found in Myxoma virus (strain Uriarra) (MYXV).